A 158-amino-acid chain; its full sequence is MSRSPRKTPKSPSLQLGQAVEWPATPDAARLDRVPNPQAGTDYLVRFTAPEFTSLCPVTGQPDFAHLVIDYAPGAWLVESKSLKLYLASFRNHGGFHEDCTVSIGKRIAAEIKPKWLRIGGYWYPRGGIPIDVFWQTGKLPKGMWVPDQGVAPYRGRG.

Cysteine 56 functions as the Thioimide intermediate in the catalytic mechanism. Residue aspartate 63 is the Proton donor of the active site. Substrate is bound by residues 78 to 80 (VES) and 97 to 98 (HE).

It belongs to the GTP cyclohydrolase I family. QueF type 1 subfamily.

The protein localises to the cytoplasm. The enzyme catalyses 7-aminomethyl-7-carbaguanine + 2 NADP(+) = 7-cyano-7-deazaguanine + 2 NADPH + 3 H(+). The protein operates within tRNA modification; tRNA-queuosine biosynthesis. In terms of biological role, catalyzes the NADPH-dependent reduction of 7-cyano-7-deazaguanine (preQ0) to 7-aminomethyl-7-deazaguanine (preQ1). This is NADPH-dependent 7-cyano-7-deazaguanine reductase from Rhodopseudomonas palustris (strain BisB5).